The chain runs to 69 residues: Light-harvesting polypeptide B-800/860 alpha chain (69 aa).

Over 1-14 the chain is Cytoplasmic; it reads MTNGKIWLVVKPTV. A helical membrane pass occupies residues 15 to 35; the sequence is GLPIGMLFAALLAVLIHGLLF. An a bacteriochlorophyll-binding site is contributed by His-31. Topologically, residues 36 to 69 are periplasmic; that stretch reads VDGRLKSWWSEFPVAKPAVVSVQAAPAPVAAEVK.

Belongs to the antenna complex alpha subunit family. As to quaternary structure, the core complex is formed by different alpha and beta chains, binding bacteriochlorophyll molecules, and arranged most probably in tetrameric structures disposed around the reaction center. The non-pigmented gamma chains may constitute additional components.

The protein resides in the cell inner membrane. Functionally, antenna complexes are light-harvesting systems, which transfer the excitation energy to the reaction centers. This is Light-harvesting polypeptide B-800/860 alpha chain from Rhodocyclus tenuis (Rhodospirillum tenue).